A 419-amino-acid polypeptide reads, in one-letter code: Zinc finger protein Pegasus (419 aa).

Lysine 5 is covalently cross-linked (Glycyl lysine isopeptide (Lys-Gly) (interchain with G-Cter in SUMO2)). C2H2-type zinc fingers lie at residues 82–104, 110–132, and 138–161; these read LKCRYCNYASKGTARLIEHIRIH, HRCHLCPFASAYERHLEAHMRSH, and YKCELCSFRCSDRSNLSHHRRRKH. Lysine 185 participates in a covalent cross-link: Glycyl lysine isopeptide (Lys-Gly) (interchain with G-Cter in SUMO2). Composition is skewed to polar residues over residues 223-236 and 262-273; these read QTDSYESMAKTTPT and LSSLPPENQNPA. Disordered stretches follow at residues 223–247 and 262–356; these read QTDSYESMAKTTPTGGLPRDPQELM and LSSL…PALP. The segment covering 290 to 311 has biased composition (low complexity); the sequence is QPSTQAVVSAVSASIPQSSSPT. The segment covering 332–349 has biased composition (polar residues); that stretch reads SEPSAHTSTPSIGNSQPS. C2H2-type zinc fingers lie at residues 364–386 and 392–416; these read HHCQHCDMYFADNILYTIHMGCH and FQCNICGCKCKNKYDFACHFARGQH.

This sequence belongs to the Ikaros C2H2-type zinc-finger protein family. Self-associates. Interacts with other family members; IKZF1, IKZF2, IKZF3 and IKZF4. In terms of tissue distribution, expressed in brain, heart, skeletal muscle, kidney, and liver. Expressed in the hematopoietic cell lines MOLT-4, NALM-6 and K-562. Highly expressed in THP-1 and M-07e cell lines, which have characteristics of myeloid and early megakaryocytic cells respectively.

The protein resides in the nucleus. Functionally, transcriptional repressor that binds the core 5'GNNTGTNG-3' DNA consensus sequence. Involved in megakaryocyte differentiation. The sequence is that of Zinc finger protein Pegasus (IKZF5) from Homo sapiens (Human).